Here is a 608-residue protein sequence, read N- to C-terminus: Myosin light chain kinase 2, skeletal/cardiac muscle (608 aa).

Positions M1–P160 are disordered. A2 carries the post-translational modification N-acetylalanine. 2 stretches are compositionally biased toward basic and acidic residues: residues A31–K43 and T50–A63. A compositionally biased stretch (gly residues) spans G82–G91. Residues A116–P127 are compositionally biased toward basic and acidic residues. Residues S153, S159, and S161 each carry the phosphoserine modification. The interval Q214–S235 is disordered. In terms of domain architecture, Protein kinase spans M297–L552. Residues L303 to V311 and K326 contribute to the ATP site. D418 functions as the Proton acceptor in the catalytic mechanism. Position 457 is a phosphothreonine (T457). Residues I586 to S598 are calmodulin-binding.

The protein belongs to the protein kinase superfamily. CAMK Ser/Thr protein kinase family. In terms of assembly, may interact with centrin.

It localises to the cytoplasm. The catalysed reaction is L-seryl-[myosin light chain] + ATP = O-phospho-L-seryl-[myosin light chain] + ADP + H(+). The enzyme catalyses L-threonyl-[myosin light chain] + ATP = O-phospho-L-threonyl-[myosin light chain] + ADP + H(+). Implicated in the level of global muscle contraction and cardiac function. Phosphorylates a specific serine in the N-terminus of a myosin light chain. The protein is Myosin light chain kinase 2, skeletal/cardiac muscle (MYLK2) of Oryctolagus cuniculus (Rabbit).